The sequence spans 471 residues: Uronate isomerase (471 aa).

This sequence belongs to the metallo-dependent hydrolases superfamily. Uronate isomerase family.

The catalysed reaction is D-glucuronate = D-fructuronate. It carries out the reaction aldehydo-D-galacturonate = keto-D-tagaturonate. It functions in the pathway carbohydrate metabolism; pentose and glucuronate interconversion. The protein is Uronate isomerase of Cellvibrio japonicus (strain Ueda107) (Pseudomonas fluorescens subsp. cellulosa).